Here is a 710-residue protein sequence, read N- to C-terminus: Solute carrier organic anion transporter family member 3A1 (710 aa).

Met-1 bears the N-acetylmethionine mark. The segment covering 1 to 15 has biased composition (gly residues); it reads MQGKKPGGSSGGGRS. The disordered stretch occupies residues 1-25; sequence MQGKKPGGSSGGGRSGELQGDEAQR. Residues 1–40 lie on the Cytoplasmic side of the membrane; that stretch reads MQGKKPGGSSGGGRSGELQGDEAQRNKKKKKKVSCFSNIK. The helical transmembrane segment at 41–60 threads the bilayer; the sequence is IFLVSECALMLAQGTVGAYL. The Extracellular portion of the chain corresponds to 61–79; that stretch reads VSVLTTLERRFNLQSADVG. A helical membrane pass occupies residues 80 to 100; sequence VIASSFEIGNLALILFVSYFG. Over 101 to 106 the chain is Cytoplasmic; it reads ARGHRP. The chain crosses the membrane as a helical span at residues 107–131; it reads RLIGCGGIVMALGALLSALPEFLTH. At 132–174 the chain is on the extracellular side; the sequence is QYKYEAGEIRWGAEGRDVCATNGSSSDEGPDPDLICRNRTATN. Residues Asn-153 and Asn-169 are each glycosylated (N-linked (GlcNAc...) asparagine). A helical membrane pass occupies residues 175-203; the sequence is MMYLLLIGAQVLLGIGATPVQPLGVSYID. Over 204 to 222 the chain is Cytoplasmic; sequence DHVRRKDSSLYIGILFTML. The chain crosses the membrane as a helical span at residues 223–243; the sequence is VFGPACGFILGSFCTKIYVDA. At 244 to 261 the chain is on the extracellular side; it reads VFIDTSNLDITPDDPRWI. A helical membrane pass occupies residues 262 to 286; it reads GAWWGGFLLCGALLFFSSLLMFGFP. The Cytoplasmic segment spans residues 287 to 344; the sequence is QSLPPHSEPGMESEQAMLPEREYERPKPSNGVLRHPLEPDSSASCFQQLRVIPKVTKH. A helical transmembrane segment spans residues 345–366; that stretch reads LLSNPVFTCIVLAACMEIAVVA. Topologically, residues 367–386 are extracellular; the sequence is GFAAFLGKYLEQQFNLTTSS. Asn-381 carries an N-linked (GlcNAc...) asparagine glycan. Residues 387 to 410 traverse the membrane as a helical segment; the sequence is ANQLLGMTAIPCACLGIFLGGLLV. The Cytoplasmic portion of the chain corresponds to 411-414; the sequence is KKLS. The chain crosses the membrane as a helical span at residues 415 to 438; that stretch reads LSALGAIRMAMLVNLVSTACYVSF. Topologically, residues 439–539 are extracellular; the sequence is LFLGCDTVPV…PGCQEAFLTF (101 aa). N-linked (GlcNAc...) asparagine glycosylation is present at Asn-457. A Kazal-like domain is found at 465–513; it reads LDPYSPCNNNCECQTDSFTPVCGADGITYLSACFAGCNSTNLTGCACLT. Cystine bridges form between Cys-471/Cys-501, Cys-477/Cys-497, and Cys-486/Cys-511. N-linked (GlcNAc...) asparagine glycosylation is found at Asn-502, Asn-505, and Asn-519. The chain crosses the membrane as a helical span at residues 540–562; the sequence is LCVMCVCSLIGAMAQTPSVIILI. Over 563–571 the chain is Cytoplasmic; it reads RTVSPELKS. A helical membrane pass occupies residues 572 to 597; it reads YALGVLFLLLRLLGFIPPPLIFGAGI. Topologically, residues 598–630 are extracellular; sequence DSTCLFWSTFCGEQGACVLYDNVVYRYLYVSIA. A helical membrane pass occupies residues 631–648; it reads IALKSFAFILYTTTWQCL. Topologically, residues 649 to 705 are cytoplasmic; sequence RKNYKRYIKNHEGGLSTSEFLASTLTLDNLGRDPVPAHQTHRTKFIYNLEDHEWCEN.

This sequence belongs to the organo anion transporter (TC 2.A.60) family. As to expression, expressed in many brain regions, including frontal cortex, brain stem and cerebellum. Associated with neuronal bodies in a punctated matter. Detected at the arcuate nucleus and the choroid plexus (at protein level). Little expression, if any, in oligodendrocytes. In the cardiovascular system, detected in cardiac muscle cells and endothelial cells of aorta, coronary artery and left ventricular endocardium (at protein level). In the respiratory system, detected in alveolar epithelial cells and in mucosal epithelium of the trachea (at protein level). In the reproductive system, detected in spermatozoa, oocytes, smooth muscle cells of the ovary, epithelium of the glandula uterine, smooth muscle cells of the myometrium and epithelium of the endometrium (at protein level). In the kidney, detected in afferent and efferent arterioles, and the epithelium of distal tubules and collecting tubules (at protein level).

It is found in the basolateral cell membrane. It localises to the apical cell membrane. Its subcellular location is the basal cell membrane. The enzyme catalyses L-thyroxine(out) = L-thyroxine(in). It carries out the reaction prostaglandin E1(out) = prostaglandin E1(in). The catalysed reaction is prostaglandin E2(out) = prostaglandin E2(in). It catalyses the reaction prostaglandin F2alpha(out) = prostaglandin F2alpha(in). The enzyme catalyses (5Z,8Z,11Z,14Z)-eicosatetraenoate(out) = (5Z,8Z,11Z,14Z)-eicosatetraenoate(in). It carries out the reaction taurocholate(out) = taurocholate(in). The catalysed reaction is glycocholate(out) = glycocholate(in). It catalyses the reaction estrone 3-sulfate(out) = estrone 3-sulfate(in). The enzyme catalyses argipressin(out) = argipressin(in). Putative organic anion antiporter with apparent broad substrate specificity. Recognizes various substrates including thyroid hormone L-thyroxine, prostanoids such as prostaglandin E1 and E2, bile acids such as taurocholate, glycolate and glycochenodeoxycholate and peptide hormones such as L-arginine vasopressin, likely operating in a tissue-specific manner. The transport mechanism, its electrogenicity and potential tissue-specific counterions remain to be elucidated. In Rattus norvegicus (Rat), this protein is Solute carrier organic anion transporter family member 3A1 (Slco3a1).